Here is a 232-residue protein sequence, read N- to C-terminus: 7-cyano-7-deazaguanine synthase (232 aa).

ATP is bound at residue 8–18; it reads FSGGQDSTTCL. Zn(2+) is bound by residues Cys-187, Cys-196, Cys-199, and Cys-202.

This sequence belongs to the QueC family. The cofactor is Zn(2+).

The enzyme catalyses 7-carboxy-7-deazaguanine + NH4(+) + ATP = 7-cyano-7-deazaguanine + ADP + phosphate + H2O + H(+). The protein operates within purine metabolism; 7-cyano-7-deazaguanine biosynthesis. Functionally, catalyzes the ATP-dependent conversion of 7-carboxy-7-deazaguanine (CDG) to 7-cyano-7-deazaguanine (preQ(0)). The chain is 7-cyano-7-deazaguanine synthase from Vibrio vulnificus (strain YJ016).